The primary structure comprises 94 residues: Large ribosomal subunit protein bL25 (94 aa).

It belongs to the bacterial ribosomal protein bL25 family. As to quaternary structure, part of the 50S ribosomal subunit; part of the 5S rRNA/L5/L18/L25 subcomplex. Contacts the 5S rRNA. Binds to the 5S rRNA independently of L5 and L18.

Its function is as follows. This is one of the proteins that binds to the 5S RNA in the ribosome where it forms part of the central protuberance. This is Large ribosomal subunit protein bL25 from Escherichia coli O6:K15:H31 (strain 536 / UPEC).